Consider the following 149-residue polypeptide: MLSPKRVKFRKQQRGRMRGIATRGNTIAFGQFALQAQECGWITSRQIEASRRAMTRYVKRGGRIWIRVFPDKPVTMRAAETRMGSGKGNPEFWVAVIKPGRILFEMGGPEITETIAREAMRLAQYKLPLKTKFLILNSQESETLVTPEV.

It belongs to the universal ribosomal protein uL16 family. Part of the 50S ribosomal subunit.

Its subcellular location is the plastid. The protein localises to the organellar chromatophore. This chain is Large ribosomal subunit protein uL16c (rpl16), found in Paulinella chromatophora.